A 436-amino-acid polypeptide reads, in one-letter code: Aminopeptidase C (436 aa).

Residues Cys68, His356, and Asn378 contribute to the active site.

Belongs to the peptidase C1 family. Homohexamer.

The catalysed reaction is Inactivates bleomycin B2 (a cytotoxic glycometallopeptide) by hydrolysis of a carboxyamide bond of beta-aminoalanine, but also shows general aminopeptidase activity. The specificity varies somewhat with source, but amino acid arylamides of Met, Leu and Ala are preferred.. In terms of biological role, hydrolyzes naphthylamide-substituted amino acids as well as di- and tripeptides in which the half-cystine residue is involved in a disulfide loop, notably in oxytocin and vasopressin. Also has a bleomycin hydrolase activity. The protein is Aminopeptidase C (pepC) of Lactococcus lactis subsp. cremoris (Streptococcus cremoris).